We begin with the raw amino-acid sequence, 439 residues long: C4-dicarboxylate transport protein (439 aa).

9 consecutive transmembrane segments (helical) span residues leucine 10 to proline 30, leucine 45 to methionine 65, leucine 77 to valine 97, alanine 145 to leucine 165, valine 185 to methionine 205, leucine 223 to threonine 243, valine 290 to leucine 310, threonine 332 to phenylalanine 352, and isoleucine 353 to isoleucine 373. The disordered stretch occupies residues leucine 415 to histidine 439.

It belongs to the dicarboxylate/amino acid:cation symporter (DAACS) (TC 2.A.23) family.

The protein localises to the cell inner membrane. Functionally, responsible for the transport of dicarboxylates such as succinate, fumarate, and malate from the periplasm across the membrane. The polypeptide is C4-dicarboxylate transport protein (Verminephrobacter eiseniae (strain EF01-2)).